Reading from the N-terminus, the 460-residue chain is Polygalacturonase (460 aa).

A signal peptide spans 1 to 26; it reads MALKTQLLWSFVVVFVVSFSTTSCSG. N280 carries an N-linked (GlcNAc...) asparagine glycan. D292 acts as the Proton donor in catalysis. The active site involves H315. N421 carries N-linked (GlcNAc...) asparagine glycosylation.

The protein belongs to the glycosyl hydrolase 28 family.

Its subcellular location is the secreted. It localises to the cell wall. The catalysed reaction is (1,4-alpha-D-galacturonosyl)n+m + H2O = (1,4-alpha-D-galacturonosyl)n + (1,4-alpha-D-galacturonosyl)m.. In terms of biological role, acts in concert with the pectinesterase, in the ripening process. Is involved in cell wall metabolism, specifically in polyuronide degradation. This Malus domestica (Apple) protein is Polygalacturonase.